The following is a 293-amino-acid chain: uncharacterized protein (293 aa).

The active site involves Asp-119.

This sequence belongs to the pseudouridine synthase RluA family.

It carries out the reaction a uridine in RNA = a pseudouridine in RNA. This is an uncharacterized protein from Helicobacter pylori (strain J99 / ATCC 700824) (Campylobacter pylori J99).